A 387-amino-acid chain; its full sequence is Probable serine/threonine-protein kinase RIO1 homolog (387 aa).

In terms of domain architecture, Protein kinase spans 41–387 (VNLQGSLCTG…RYIGMKKRKN (347 aa)). Lys-91 lines the ATP pocket. Asp-204 serves as the catalytic Proton acceptor. The Mg(2+) site is built by Asn-209 and Asp-221. Asp-221 functions as the 4-aspartylphosphate intermediate in the catalytic mechanism. Positions 309 to 372 (EFGSTTDSDL…RASRISKKEK (64 aa)) are disordered. Low complexity predominate over residues 312 to 321 (STTDSDLSST). A compositionally biased stretch (basic residues) spans 361–372 (IRRASRISKKEK).

Belongs to the protein kinase superfamily. RIO-type Ser/Thr kinase family. Mg(2+) serves as cofactor.

The protein localises to the cytoplasm. It carries out the reaction L-seryl-[protein] + ATP = O-phospho-L-seryl-[protein] + ADP + H(+). It catalyses the reaction L-threonyl-[protein] + ATP = O-phospho-L-threonyl-[protein] + ADP + H(+). The enzyme catalyses ATP + H2O = ADP + phosphate + H(+). In terms of biological role, required for the final endonucleolytic cleavage at site D converting 20S pre-rRNA into the mature 18S rRNA. Required for the final steps of cytoplasmic maturation of the 40S ribosomal subunit. Despite the protein kinase domain is proposed to act predominantly as an ATPase. Has a role in the cell cycle where it is required for entrance into S-phase and in the control of the onset of anaphase. Appears to also be involved in the maintenance of chromosome stability and correct mitotic segregation. The sequence is that of Probable serine/threonine-protein kinase RIO1 homolog (RIO1) from Encephalitozoon cuniculi (strain GB-M1) (Microsporidian parasite).